Consider the following 590-residue polypeptide: Aspartate--tRNA ligase (590 aa).

L-aspartate is bound at residue E174. Residues 198 to 201 (QLMK) form an aspartate region. R220 serves as a coordination point for L-aspartate. ATP-binding positions include 220-222 (RDE) and Q229. H443 provides a ligand contact to L-aspartate. E484 contributes to the ATP binding site. R491 is an L-aspartate binding site. 536–539 (GLDR) contributes to the ATP binding site.

It belongs to the class-II aminoacyl-tRNA synthetase family. Type 1 subfamily. As to quaternary structure, homodimer.

The protein localises to the cytoplasm. The enzyme catalyses tRNA(Asp) + L-aspartate + ATP = L-aspartyl-tRNA(Asp) + AMP + diphosphate. Functionally, catalyzes the attachment of L-aspartate to tRNA(Asp) in a two-step reaction: L-aspartate is first activated by ATP to form Asp-AMP and then transferred to the acceptor end of tRNA(Asp). The chain is Aspartate--tRNA ligase from Lactococcus lactis subsp. cremoris (strain SK11).